Consider the following 95-residue polypeptide: Aspartyl/glutamyl-tRNA(Asn/Gln) amidotransferase subunit C (95 aa).

The interval 74 to 95 (GQALEPAPDADNEHFLVPQVVE) is disordered.

This sequence belongs to the GatC family. Heterotrimer of A, B and C subunits.

The catalysed reaction is L-glutamyl-tRNA(Gln) + L-glutamine + ATP + H2O = L-glutaminyl-tRNA(Gln) + L-glutamate + ADP + phosphate + H(+). It catalyses the reaction L-aspartyl-tRNA(Asn) + L-glutamine + ATP + H2O = L-asparaginyl-tRNA(Asn) + L-glutamate + ADP + phosphate + 2 H(+). Allows the formation of correctly charged Asn-tRNA(Asn) or Gln-tRNA(Gln) through the transamidation of misacylated Asp-tRNA(Asn) or Glu-tRNA(Gln) in organisms which lack either or both of asparaginyl-tRNA or glutaminyl-tRNA synthetases. The reaction takes place in the presence of glutamine and ATP through an activated phospho-Asp-tRNA(Asn) or phospho-Glu-tRNA(Gln). In Salinibacter ruber (strain DSM 13855 / M31), this protein is Aspartyl/glutamyl-tRNA(Asn/Gln) amidotransferase subunit C.